Consider the following 72-residue polypeptide: U-actitoxin-Aeq5b (72 aa).

The first 20 residues, 1–20, serve as a signal peptide directing secretion; the sequence is MNQVMTIFLVLGVIVYSVES. 4 disulfides stabilise this stretch: Cys-33/Cys-71, Cys-37/Cys-66, Cys-44/Cys-59, and Cys-50/Cys-56.

It belongs to the Acrorhagin I family. In terms of tissue distribution, expressed by acrorhagi.

It localises to the secreted. The protein localises to the nematocyst. In terms of biological role, toxin that is lethal to crab. It interacts with divalent metal ions (zinc and nickel) suggesting it may function as a metal ion chelator to regulate metal ion levels or as a metal ion transporter, or that its function is modulated by metal ions. Is not active against any of the voltage-gated potassium and sodium channels tested. In addition, it does not show activity in bacterial and fungal growth inhibitory assays as well as in hemolytic assays. The sequence is that of U-actitoxin-Aeq5b from Actinia equina (Beadlet anemone).